The chain runs to 461 residues: tRNA(Ile)-lysidine synthase (461 aa).

Residue 26 to 31 participates in ATP binding; the sequence is SGGPDS.

The protein belongs to the tRNA(Ile)-lysidine synthase family.

Its subcellular location is the cytoplasm. The catalysed reaction is cytidine(34) in tRNA(Ile2) + L-lysine + ATP = lysidine(34) in tRNA(Ile2) + AMP + diphosphate + H(+). Its function is as follows. Ligates lysine onto the cytidine present at position 34 of the AUA codon-specific tRNA(Ile) that contains the anticodon CAU, in an ATP-dependent manner. Cytidine is converted to lysidine, thus changing the amino acid specificity of the tRNA from methionine to isoleucine. The polypeptide is tRNA(Ile)-lysidine synthase (Clostridium acetobutylicum (strain ATCC 824 / DSM 792 / JCM 1419 / IAM 19013 / LMG 5710 / NBRC 13948 / NRRL B-527 / VKM B-1787 / 2291 / W)).